The sequence spans 364 residues: Dihydroorotate dehydrogenase (quinone) (364 aa).

Residues 61–65 (AGFDK) and Thr85 each bind FMN. Substrate is bound at residue Lys65. 110–114 (NRMGF) provides a ligand contact to substrate. The FMN site is built by Asn139 and Asn170. Position 170 (Asn170) interacts with substrate. Ser173 (nucleophile) is an active-site residue. Asn175 contributes to the substrate binding site. FMN-binding residues include Lys214 and Ala242. 243–244 (NT) is a binding site for substrate. FMN-binding positions include Gly266, Gly295, and 316–317 (YS).

Belongs to the dihydroorotate dehydrogenase family. Type 2 subfamily. Monomer. FMN is required as a cofactor.

It localises to the cell membrane. The enzyme catalyses (S)-dihydroorotate + a quinone = orotate + a quinol. Its pathway is pyrimidine metabolism; UMP biosynthesis via de novo pathway; orotate from (S)-dihydroorotate (quinone route): step 1/1. Functionally, catalyzes the conversion of dihydroorotate to orotate with quinone as electron acceptor. The chain is Dihydroorotate dehydrogenase (quinone) from Rhodopseudomonas palustris (strain HaA2).